The chain runs to 353 residues: UDP-N-acetylglucosamine--N-acetylmuramyl-(pentapeptide) pyrophosphoryl-undecaprenol N-acetylglucosamine transferase (353 aa).

UDP-N-acetyl-alpha-D-glucosamine contacts are provided by residues 10–12 (TGG), N124, S183, and Q283.

Belongs to the glycosyltransferase 28 family. MurG subfamily.

The protein resides in the cell inner membrane. The enzyme catalyses di-trans,octa-cis-undecaprenyl diphospho-N-acetyl-alpha-D-muramoyl-L-alanyl-D-glutamyl-meso-2,6-diaminopimeloyl-D-alanyl-D-alanine + UDP-N-acetyl-alpha-D-glucosamine = di-trans,octa-cis-undecaprenyl diphospho-[N-acetyl-alpha-D-glucosaminyl-(1-&gt;4)]-N-acetyl-alpha-D-muramoyl-L-alanyl-D-glutamyl-meso-2,6-diaminopimeloyl-D-alanyl-D-alanine + UDP + H(+). The protein operates within cell wall biogenesis; peptidoglycan biosynthesis. Its function is as follows. Cell wall formation. Catalyzes the transfer of a GlcNAc subunit on undecaprenyl-pyrophosphoryl-MurNAc-pentapeptide (lipid intermediate I) to form undecaprenyl-pyrophosphoryl-MurNAc-(pentapeptide)GlcNAc (lipid intermediate II). This is UDP-N-acetylglucosamine--N-acetylmuramyl-(pentapeptide) pyrophosphoryl-undecaprenol N-acetylglucosamine transferase from Helicobacter pylori (strain J99 / ATCC 700824) (Campylobacter pylori J99).